A 129-amino-acid polypeptide reads, in one-letter code: Trefoil factor 2 (129 aa).

The first 23 residues, 1–23, serve as a signal peptide directing secretion; sequence MGPRGAPLLVVVLVLGLHALAEG. 2 P-type domains span residues 29–73 and 79–122; these read CRCS…FHPL and EQCV…FFPQ. Disulfide bonds link cysteine 29/cysteine 127, cysteine 31/cysteine 58, cysteine 42/cysteine 57, cysteine 52/cysteine 69, cysteine 81/cysteine 107, cysteine 91/cysteine 106, and cysteine 101/cysteine 118.

Expressed in the digestive tract, where it was found predominantly in the stomach with highest expression in the antrum. It is secreted predominantly from antral mucous cells into the lumen of the gastrointestinal tract.

The protein resides in the secreted. Inhibits gastrointestinal motility and gastric acid secretion. Could function as a structural component of gastric mucus, possibly by stabilizing glycoproteins in the mucus gel through interactions with carbohydrate side chains. The protein is Trefoil factor 2 (Tff2) of Rattus norvegicus (Rat).